We begin with the raw amino-acid sequence, 942 residues long: Eukaryotic translation initiation factor 3 subunit A (942 aa).

One can recognise a PCI domain in the interval Phe-320–Phe-494. 4 coiled-coil regions span residues Lys-499–Ile-529, Ile-588–Glu-669, Ser-705–Lys-734, and Ile-821–Gln-912. The segment at Gly-502–Pro-546 is disordered. Acidic residues predominate over residues Val-504–Asn-538. Basic and acidic residues-rich tracts occupy residues Arg-836–Ser-870 and Arg-889–Ala-911. Positions Arg-836–Lys-942 are disordered.

It belongs to the eIF-3 subunit A family. In terms of assembly, component of the eukaryotic translation initiation factor 3 (eIF-3) complex.

Its subcellular location is the cytoplasm. RNA-binding component of the eukaryotic translation initiation factor 3 (eIF-3) complex, which is involved in protein synthesis of a specialized repertoire of mRNAs and, together with other initiation factors, stimulates binding of mRNA and methionyl-tRNAi to the 40S ribosome. The eIF-3 complex specifically targets and initiates translation of a subset of mRNAs involved in cell proliferation. This is Eukaryotic translation initiation factor 3 subunit A from Vanderwaltozyma polyspora (strain ATCC 22028 / DSM 70294 / BCRC 21397 / CBS 2163 / NBRC 10782 / NRRL Y-8283 / UCD 57-17) (Kluyveromyces polysporus).